Consider the following 360-residue polypeptide: NAD(P)H-quinone oxidoreductase subunit 1, chloroplastic (360 aa).

Transmembrane regions (helical) follow at residues 30 to 50 (FLPIFSLVLGILTGVLVLVWL), 98 to 118 (FSIGPSIAVISILLSYSVIPF), 127 to 147 (FNIGIFLWIAISSIAPIGLLM), 165 to 185 (AAQSISYEIPLTLCLLSISLL), 203 to 223 (FWGWNLWRQPIGFIIFLISSL), 248 to 268 (YSGIKFGLFYVASYLNLLISS), 297 to 317 (IFGTTIGIFITLAKTYLFLFI), and 340 to 360 (FLLPISLGNLLLTTSFQVFSL).

It belongs to the complex I subunit 1 family. In terms of assembly, NDH is composed of at least 16 different subunits, 5 of which are encoded in the nucleus.

The protein localises to the plastid. It localises to the chloroplast thylakoid membrane. It carries out the reaction a plastoquinone + NADH + (n+1) H(+)(in) = a plastoquinol + NAD(+) + n H(+)(out). It catalyses the reaction a plastoquinone + NADPH + (n+1) H(+)(in) = a plastoquinol + NADP(+) + n H(+)(out). Functionally, NDH shuttles electrons from NAD(P)H:plastoquinone, via FMN and iron-sulfur (Fe-S) centers, to quinones in the photosynthetic chain and possibly in a chloroplast respiratory chain. The immediate electron acceptor for the enzyme in this species is believed to be plastoquinone. Couples the redox reaction to proton translocation, and thus conserves the redox energy in a proton gradient. The protein is NAD(P)H-quinone oxidoreductase subunit 1, chloroplastic of Aethionema grandiflorum (Persian stone-cress).